Reading from the N-terminus, the 486-residue chain is Aspartyl/glutamyl-tRNA(Asn/Gln) amidotransferase subunit B (486 aa).

It belongs to the GatB/GatE family. GatB subfamily. As to quaternary structure, heterotrimer of A, B and C subunits.

It catalyses the reaction L-glutamyl-tRNA(Gln) + L-glutamine + ATP + H2O = L-glutaminyl-tRNA(Gln) + L-glutamate + ADP + phosphate + H(+). The enzyme catalyses L-aspartyl-tRNA(Asn) + L-glutamine + ATP + H2O = L-asparaginyl-tRNA(Asn) + L-glutamate + ADP + phosphate + 2 H(+). Functionally, allows the formation of correctly charged Asn-tRNA(Asn) or Gln-tRNA(Gln) through the transamidation of misacylated Asp-tRNA(Asn) or Glu-tRNA(Gln) in organisms which lack either or both of asparaginyl-tRNA or glutaminyl-tRNA synthetases. The reaction takes place in the presence of glutamine and ATP through an activated phospho-Asp-tRNA(Asn) or phospho-Glu-tRNA(Gln). This is Aspartyl/glutamyl-tRNA(Asn/Gln) amidotransferase subunit B from Orientia tsutsugamushi (strain Ikeda) (Rickettsia tsutsugamushi).